Here is a 377-residue protein sequence, read N- to C-terminus: 3-dehydroquinate synthase (377 aa).

NAD(+) contacts are provided by residues 113–117 (GVIGD), 137–138 (TT), K150, K159, and 177–180 (FLDT). 3 residues coordinate Zn(2+): E192, H254, and H273.

It belongs to the sugar phosphate cyclases superfamily. Dehydroquinate synthase family. Co(2+) is required as a cofactor. Zn(2+) serves as cofactor. The cofactor is NAD(+).

It is found in the cytoplasm. The catalysed reaction is 7-phospho-2-dehydro-3-deoxy-D-arabino-heptonate = 3-dehydroquinate + phosphate. It functions in the pathway metabolic intermediate biosynthesis; chorismate biosynthesis; chorismate from D-erythrose 4-phosphate and phosphoenolpyruvate: step 2/7. Its function is as follows. Catalyzes the conversion of 3-deoxy-D-arabino-heptulosonate 7-phosphate (DAHP) to dehydroquinate (DHQ). This chain is 3-dehydroquinate synthase, found in Bartonella quintana (strain Toulouse) (Rochalimaea quintana).